The sequence spans 261 residues: LALLALLALFVSATNAFIIPQCSLAPSAIIPQFLPPVTSMGFEHLAVQAYRLQQALAASVLQQPINQLQQQSLAHLTIQTIATQQQQQFLPSVSQLDVVNPVAYLQQQLLASNPLALANVAAYQQQQQLQQFLPALSQLAMVNPAAYLQQQQLLSSSPLAVGNAPTYLQQQLLQQIVPALTQLAVANPAAYLQQLLPFNQLTVSNSAAYLQQRQQLLNPLEVPNPLVAGFLQQQQLLPYSQFSLMNPALSWQQPIVGGAIF.

Residues 1–16 (LALLALLALFVSATNA) form the signal peptide.

The protein belongs to the zein family.

Functionally, zeins are major seed storage proteins. The polypeptide is 22 kDa alpha-zein 8b (Zea mays (Maize)).